The primary structure comprises 456 residues: MSGFDRRSFLKASMVTAAATALAACASSERATGTTPKAAGKSVMGLVVPKMDEVRVGLIGVGERGIGFVHHFSRIEGARITAICDTDTLVLARAEKAINEYGRDKPAYFSKGDHAYRDLLNRDDVDIVVIATPWAWHHPMAKEAMLAGKHAFVEVPMAGTIEELWDLVDTAELTQRNCMMMENVCYGRDELMVLNMVRQGLFGELLHGEAAYIHELRWQMKEIDRKTGSWRTAYHAKYNGNLYPTHGLGPVAQYMNINRGDRLDYLTSVSSPSLGRAAYAKREFPADHQRNQLKYIGGDMNTSLIKTVKGRSIMVQHDTTTPRPYSRHNLIQGTNGVFAGFPNRIALENGGSGSYHEWDENMDSWYAKYDHPLWTRMGKEAEENGGHGGMDFLMCWRMIYCLRNGEALDQDVYDGAAWSAVFPLSVASVGDRGNSKDFPDFTRGVWQTAKPLGIVG.

Positions 1–33 form a signal peptide, tat-type signal; the sequence is MSGFDRRSFLKASMVTAAATALAACASSERATG. NAD(+) is bound by residues 63–64, D85, 134–137, 154–155, and N183; these read ER, WAWH, and EV. Substrate-binding positions include Y212, R231, 243-246, and Y325; that span reads YPTH. Y243 is a binding site for NAD(+).

The protein belongs to the Gfo/Idh/MocA family. Glycosyl hydrolase 109 subfamily. The cofactor is NAD(+). In terms of processing, predicted to be exported by the Tat system. The position of the signal peptide cleavage has not been experimentally proven.

Functionally, glycosidase. The sequence is that of Glycosyl hydrolase family 109 protein 2 from Shewanella sp. (strain ANA-3).